Reading from the N-terminus, the 330-residue chain is Cyclin N-terminal domain-containing protein 1 (330 aa).

A Cyclin N-terminal domain is found at Asp27–Asn178.

As to quaternary structure, interacts with PRR19; this interaction promotes crossover formation. Interacts with RFC3 and RFC4; these interactions facilitate crossover formation. Interacts with CDC34; this interaction regulates the cell-cycle progression.

The protein localises to the nucleus. It is found in the cytoplasm. Its subcellular location is the chromosome. In terms of biological role, plays a role in the different steps of crossover formation during meiotic recombination. Participates in the crossover differentiation step of crossover-specific recombination intermediates through its interaction with PRR19. In addition, stimulates crossover formation through the interactions with RFC3 and RFC4 and simultaneously regulates cell-cycle progression through interactions with CDC34 and subsequent ubiquitination of WEE1. May also participates in an active deselection process that destabilizes or removes excess pre-CO intermediates. The sequence is that of Cyclin N-terminal domain-containing protein 1 from Homo sapiens (Human).